The sequence spans 815 residues: (-)-kolavenyl diphosphate synthase TPS28, chloroplastic (815 aa).

A chloroplast-targeting transit peptide spans 1 to 51 (MFMSSSSSSHARRPQLSSFSYLHPPLPFPGLSFFNTRDKRVNFDSTRIICI). K247 provides a ligand contact to substrate. Residues D379 and D381 each coordinate Mg(2+). The short motif at 379–382 (DIDD) is the DXDD motif element. Residue K465 coordinates substrate.

Belongs to the terpene synthase family. Tpsc subfamily. It depends on Mg(2+) as a cofactor.

It is found in the plastid. The protein resides in the chloroplast. It carries out the reaction (2E,6E,10E)-geranylgeranyl diphosphate = (-)-kolavenyl diphosphate. Inhibited by high concentrations of magnesium. Its function is as follows. Diterpene synthase that catalyzes the formation of (-)-kolavenyl diphosphate from geranylgeranyl diphosphate (GGPP). The polypeptide is (-)-kolavenyl diphosphate synthase TPS28, chloroplastic (Tripterygium wilfordii (Thunder God vine)).